Reading from the N-terminus, the 272-residue chain is Shikimate dehydrogenase (NADP(+)) (272 aa).

Shikimate is bound by residues 14 to 16 and Thr61; that span reads SKS. The active-site Proton acceptor is the Lys65. Shikimate-binding residues include Asn86 and Asp102. NADP(+)-binding positions include 126–130, 149–154, Ser189, and Met213; these read GAGGA and NRTFSK. Residue Tyr215 coordinates shikimate. An NADP(+)-binding site is contributed by Gly238.

This sequence belongs to the shikimate dehydrogenase family. Homodimer.

The enzyme catalyses shikimate + NADP(+) = 3-dehydroshikimate + NADPH + H(+). It functions in the pathway metabolic intermediate biosynthesis; chorismate biosynthesis; chorismate from D-erythrose 4-phosphate and phosphoenolpyruvate: step 4/7. Functionally, involved in the biosynthesis of the chorismate, which leads to the biosynthesis of aromatic amino acids. Catalyzes the reversible NADPH linked reduction of 3-dehydroshikimate (DHSA) to yield shikimate (SA). In Haemophilus influenzae (strain ATCC 51907 / DSM 11121 / KW20 / Rd), this protein is Shikimate dehydrogenase (NADP(+)).